A 602-amino-acid chain; its full sequence is MSDSDYVDYPSYNILKKIVIKDGLRAFKFFKKIIDNTSQGSVGILKCVVSDESIYVDEECEQISSREFMTINNNQNERYIIYKIGTETPYLCRHEFAVSVSLDKLSPFLPNFMKPYDLIKNVRADPRQKNPFVTLIEEKSGSEKMRLTTKKSKPKTFSDMALFEYINSNMTLAELISINVKGKRQTRVTLNEEIQKIKASDFKIINSLLNQLMIAILIAQKKLSFIHNDLHFDNVLICKCLQRTFMLYVFEYNSICYALLPTYGYYPIIIDYGFSFSEDLIGGPLLTGIHHNNKGYMNHQYDEFTDFKTMLTRLSYSGYQFGLDKKDAFQSLIFDKLISKLPIDKQTGWDETKDISVSKQLVRHIRIFVDDYLKSINRESFFQKYDYEMVDMIGSLIILPLRKKNTENLVETLAIFFKEWLKIEKWIGSSHMKIFVFKNIIDKIRSDVLCSNNTPTSSFSLRENSVSLQETLQNFQKTIYKIMNEVGDNIILTGLNYELFYKSILKLSDCFEGIMYKFNQKCISRKTKEYSKMEMKSSLEMYQLVEPFISNDYQLECGDYFVVCNSINETTSSFVLKDLETVNTVNSMDRADRAEYLFKSMV.

The protein belongs to the IIV-6 098R family.

This is an uncharacterized protein from Acheta domesticus (House cricket).